A 263-amino-acid polypeptide reads, in one-letter code: Small ribosomal subunit protein eS4 (263 aa).

Residues 42–104 form the S4 RNA-binding domain; the sequence is LPLIIFLRNK…TGENFRLIYD (63 aa). A Glycyl lysine isopeptide (Lys-Gly) (interchain with G-Cter in SUMO2) cross-link involves residue K230. K233 is subject to N6-acetyllysine.

The protein belongs to the eukaryotic ribosomal protein eS4 family. In terms of assembly, component of the small ribosomal subunit. Part of the small subunit (SSU) processome, composed of more than 70 proteins and the RNA chaperone small nucleolar RNA (snoRNA) U3. Identified in a IGF2BP1-dependent mRNP granule complex containing untranslated mRNAs.

It localises to the cytoplasm. Its subcellular location is the nucleus. It is found in the nucleolus. Functionally, component of the small ribosomal subunit. The ribosome is a large ribonucleoprotein complex responsible for the synthesis of proteins in the cell. Part of the small subunit (SSU) processome, first precursor of the small eukaryotic ribosomal subunit. During the assembly of the SSU processome in the nucleolus, many ribosome biogenesis factors, an RNA chaperone and ribosomal proteins associate with the nascent pre-rRNA and work in concert to generate RNA folding, modifications, rearrangements and cleavage as well as targeted degradation of pre-ribosomal RNA by the RNA exosome. The protein is Small ribosomal subunit protein eS4 (RPS4X) of Oryctolagus cuniculus (Rabbit).